We begin with the raw amino-acid sequence, 432 residues long: Glutamyl-tRNA reductase (432 aa).

Substrate-binding positions include 55 to 58 (TCNR), Ser114, 119 to 121 (ETQ), and Gln125. The active-site Nucleophile is Cys56. NADP(+) is bound at residue 194-199 (GAGEMI).

The protein belongs to the glutamyl-tRNA reductase family. Homodimer.

It catalyses the reaction (S)-4-amino-5-oxopentanoate + tRNA(Glu) + NADP(+) = L-glutamyl-tRNA(Glu) + NADPH + H(+). It participates in porphyrin-containing compound metabolism; protoporphyrin-IX biosynthesis; 5-aminolevulinate from L-glutamyl-tRNA(Glu): step 1/2. In terms of biological role, catalyzes the NADPH-dependent reduction of glutamyl-tRNA(Glu) to glutamate 1-semialdehyde (GSA). This chain is Glutamyl-tRNA reductase, found in Burkholderia multivorans (strain ATCC 17616 / 249).